The following is a 500-amino-acid chain: Adenylosuccinate synthetase, chloroplastic (500 aa).

GTP is bound by residues Gly87–Lys93 and Gly115–Thr117. Asp88 (proton acceptor) is an active-site residue. Mg(2+)-binding residues include Asp88 and Gly115. Residues Asp88–Lys91, Asn113–His116, Thr205, Arg219, Gln299, Thr314, and Arg378 contribute to the IMP site. Residue His116 is the Proton donor of the active site. Residue Thr374 to Arg380 participates in substrate binding. GTP contacts are provided by residues Arg380, Lys406 to Asp408, and Gly489 to Gly491.

Belongs to the adenylosuccinate synthetase family. As to quaternary structure, homodimer. It depends on Mg(2+) as a cofactor.

It localises to the plastid. The protein resides in the chloroplast. The enzyme catalyses IMP + L-aspartate + GTP = N(6)-(1,2-dicarboxyethyl)-AMP + GDP + phosphate + 2 H(+). Its pathway is purine metabolism; AMP biosynthesis via de novo pathway; AMP from IMP: step 1/2. In terms of biological role, plays an important role in the de novo pathway and in the salvage pathway of purine nucleotide biosynthesis. Catalyzes the first committed step in the biosynthesis of AMP from IMP. In Solanum bulbocastanum (Wild potato), this protein is Adenylosuccinate synthetase, chloroplastic.